Here is a 414-residue protein sequence, read N- to C-terminus: Esterase FrsA (414 aa).

Belongs to the FrsA family.

The catalysed reaction is a carboxylic ester + H2O = an alcohol + a carboxylate + H(+). Its function is as follows. Catalyzes the hydrolysis of esters. This is Esterase FrsA from Escherichia coli O139:H28 (strain E24377A / ETEC).